Consider the following 266-residue polypeptide: Type III pantothenate kinase (266 aa).

Position 6-13 (aspartate 6–lysine 13) interacts with ATP. Substrate contacts are provided by residues tyrosine 94 and glycine 101–arginine 104. Aspartate 103 serves as the catalytic Proton acceptor. Residue aspartate 128 participates in K(+) binding. Threonine 131 contacts ATP. Threonine 183 is a binding site for substrate.

Belongs to the type III pantothenate kinase family. In terms of assembly, homodimer. The cofactor is NH4(+). K(+) serves as cofactor.

It localises to the cytoplasm. It carries out the reaction (R)-pantothenate + ATP = (R)-4'-phosphopantothenate + ADP + H(+). The protein operates within cofactor biosynthesis; coenzyme A biosynthesis; CoA from (R)-pantothenate: step 1/5. Functionally, catalyzes the phosphorylation of pantothenate (Pan), the first step in CoA biosynthesis. The protein is Type III pantothenate kinase of Nitrosococcus oceani (strain ATCC 19707 / BCRC 17464 / JCM 30415 / NCIMB 11848 / C-107).